The sequence spans 1360 residues: TRAF2 and NCK-interacting protein kinase (1360 aa).

In terms of domain architecture, Protein kinase spans 25–289 (FELVELVGNG…TEQLMKHPFI (265 aa)). Residues 31–39 (VGNGTYGQV) and Lys54 contribute to the ATP site. Catalysis depends on Asp153, which acts as the Proton acceptor. Thr187 bears the Phosphothreonine mark. Disordered regions lie at residues 284-347 (MKHP…LPGE), 398-440 (QKEQ…RRRA), and 539-589 (ERSR…RPVD). A compositionally biased stretch (basic and acidic residues) spans 288-307 (FIRDQPNERQVRIQLKDHID). A mediates interaction with NEDD4 region spans residues 290-1047 (RDQPNERQVR…EIRKYKKRFN (758 aa)). A compositionally biased stretch (acidic residues) spans 317 to 335 (DETEYEYSGSEEEEEENDS). Residues Ser324 and Ser326 each carry the phosphoserine modification. Phosphoserine occurs at positions 560 and 570. Thr581 carries the post-translational modification Phosphothreonine. Phosphoserine occurs at positions 600, 608, 610, and 640. 4 disordered regions span residues 601–801 (QGPA…KAID), 814–878 (LRIE…YNVG), 908–927 (TSGE…AGHI), and 933–998 (VQQS…ESSA). Residues 652-669 (RIEKFDRSSWLRQEEDIP) are compositionally biased toward basic and acidic residues. A phosphoserine mark is found at Ser678, Ser680, Ser688, Ser701, Ser707, Ser720, Ser764, Ser766, and Ser769. The span at 720–755 (SPLQRTSSGSSSSSSTPSSQPSSQGGSQPGSQAGSS) shows a compositional bias: low complexity. Composition is skewed to basic and acidic residues over residues 775 to 789 (EPAK…DITR) and 814 to 827 (LRIE…KKVT). The segment covering 834–847 (EESESSEEEEEDGE) has biased composition (acidic residues). Residues 908–917 (TSGEKKRSGH) are compositionally biased toward basic and acidic residues. Residue Ser959 is modified to Phosphoserine. The segment covering 987–996 (TDEDEEDEES) has biased composition (acidic residues). Residues 1047–1334 (NSEILCAALW…KFLCERNDKV (288 aa)) enclose the CNH domain.

Belongs to the protein kinase superfamily. STE Ser/Thr protein kinase family. STE20 subfamily. As to quaternary structure, interacts (via the CNH domain) with RAP2A (GTP-bound form preferentially); the interaction is direct and required for the activation of TNIK by RAP2A. Interacts with NEDD4; recruits RAP2A to NEDD4. Interacts with TRAF2 and NCK. Interacts with TCF7L2/TCF4 and CTNNB1; the interaction is direct. Interacts with TANC1. In terms of processing, autophosphorylated. Autophosphorylation is activated by RAP2A and induces association to the cytoskeletal fraction. Expressed ubiquitously. Highest levels observed in heart, brain and skeletal muscle. Expressed in normal colonic epithelia and colorectal cancer tissues.

The protein localises to the nucleus. The protein resides in the cytoplasm. It localises to the recycling endosome. It is found in the cytoskeleton. It carries out the reaction L-seryl-[protein] + ATP = O-phospho-L-seryl-[protein] + ADP + H(+). The enzyme catalyses L-threonyl-[protein] + ATP = O-phospho-L-threonyl-[protein] + ADP + H(+). Serine/threonine kinase that acts as an essential activator of the Wnt signaling pathway. Recruited to promoters of Wnt target genes and required to activate their expression. May act by phosphorylating TCF4/TCF7L2. Appears to act upstream of the JUN N-terminal pathway. May play a role in the response to environmental stress. Part of a signaling complex composed of NEDD4, RAP2A and TNIK which regulates neuronal dendrite extension and arborization during development. More generally, it may play a role in cytoskeletal rearrangements and regulate cell spreading. Phosphorylates SMAD1 on Thr-322. Activator of the Hippo signaling pathway which plays a pivotal role in organ size control and tumor suppression by restricting proliferation and promoting apoptosis. MAP4Ks act in parallel to and are partially redundant with STK3/MST2 and STK4/MST2 in the phosphorylation and activation of LATS1/2, and establish MAP4Ks as components of the expanded Hippo pathway. The polypeptide is TRAF2 and NCK-interacting protein kinase (Homo sapiens (Human)).